Consider the following 197-residue polypeptide: Recombination protein RecR (197 aa).

Residues 57-72 (CSTCFGITESDPCHLC) form a C4-type zinc finger. Residues 79–174 (ASICVVEEPQ…KVTRLAHGIP (96 aa)) form the Toprim domain.

This sequence belongs to the RecR family.

Its function is as follows. May play a role in DNA repair. It seems to be involved in an RecBC-independent recombinational process of DNA repair. It may act with RecF and RecO. The chain is Recombination protein RecR from Geotalea uraniireducens (strain Rf4) (Geobacter uraniireducens).